A 370-amino-acid chain; its full sequence is sn-glycerol-3-phosphate import ATP-binding protein UgpC (370 aa).

In terms of domain architecture, ABC transporter spans 4-235; that stretch reads LRLDGIRKRY…PATRFVASFL (232 aa). 37 to 44 provides a ligand contact to ATP; that stretch reads GPSGCGKS.

The protein belongs to the ABC transporter superfamily. sn-glycerol-3-phosphate importer (TC 3.A.1.1.3) family. As to quaternary structure, the complex is composed of two ATP-binding proteins (UgpC), two transmembrane proteins (UgpA and UgpE) and a solute-binding protein (UgpB).

It is found in the cell inner membrane. The catalysed reaction is sn-glycerol 3-phosphate(out) + ATP + H2O = sn-glycerol 3-phosphate(in) + ADP + phosphate + H(+). Its function is as follows. Part of the ABC transporter complex UgpBAEC involved in sn-glycerol-3-phosphate (G3P) import. Responsible for energy coupling to the transport system. This Chromohalobacter salexigens (strain ATCC BAA-138 / DSM 3043 / CIP 106854 / NCIMB 13768 / 1H11) protein is sn-glycerol-3-phosphate import ATP-binding protein UgpC.